The chain runs to 118 residues: Large ribosomal subunit protein eL18 (118 aa).

The protein belongs to the eukaryotic ribosomal protein eL18 family.

This is Large ribosomal subunit protein eL18 from Nanoarchaeum equitans (strain Kin4-M).